Here is a 124-residue protein sequence, read N- to C-terminus: MSDTLRRLGEVLESRKLANGGDPEKSYIARLFNKGDDAILKKIGEEATETVMAAKDARAAGMTDEARSKVVYEVADLWFHTMVLLSHFDLTPDDVVGELARREGLSGLEEKALRKLQARDAAGD.

Belongs to the PRA-PH family.

It localises to the cytoplasm. It catalyses the reaction 1-(5-phospho-beta-D-ribosyl)-ATP + H2O = 1-(5-phospho-beta-D-ribosyl)-5'-AMP + diphosphate + H(+). It participates in amino-acid biosynthesis; L-histidine biosynthesis; L-histidine from 5-phospho-alpha-D-ribose 1-diphosphate: step 2/9. The sequence is that of Phosphoribosyl-ATP pyrophosphatase from Ralstonia pickettii (strain 12J).